Here is a 28-residue protein sequence, read N- to C-terminus: Ranatuerin-2AVb (28 aa).

Cysteines 23 and 28 form a disulfide.

As to expression, expressed by the skin glands.

The protein localises to the secreted. Functionally, has antibacterial activity. The sequence is that of Ranatuerin-2AVb from Rana arvalis (Moor frog).